A 436-amino-acid polypeptide reads, in one-letter code: MIDRLREALKRFNPCDSCLGRAFGYGLTGLENRERGRAIKLYLGMRAHLEGEEETLELLARSGLEEAAAVLDDPPEPEPCGVCRGVLDKVDEFAEVVACELKDLEFRGFVVGSRWPEEIRKAEKELWETLGVEGEPIKREFNREVGKRVEHLLDVRADPRNPDIEVVFDFRPSLEDPKFEVHVRPIYVRGRYLKLRRGIPQTKWPCPRCRGAGCPNCDFTGKLYTESVEELIGMVLKDAFLAESHKFHAAGREDIDVRMLGNGRPFVMELLYPKRRNVDLKEIEGEINRKVGDDVQVVGLEYGDPEDVGKVKDLSERSRKRYRAWVKFGKPVPEDKLREVLKGLERSVIEQRTPRRVLHRRADKVRRKRVHEAKLIEYDGDRAVIEFLCDPGLYVKELISGDAGRTRPSLAELVEVEAECERLDVIEFLDEGGDRS.

Residue Asp-254 is the Nucleophile of the active site. 2 residues coordinate substrate: Tyr-322 and Tyr-394.

Belongs to the pseudouridine synthase Pus10 family.

It catalyses the reaction uridine(54) in tRNA = pseudouridine(54) in tRNA. The enzyme catalyses uridine(55) in tRNA = pseudouridine(55) in tRNA. Functionally, responsible for synthesis of pseudouridine from uracil-54 and uracil-55 in the psi GC loop of transfer RNAs. The polypeptide is tRNA pseudouridine synthase Pus10 (Methanopyrus kandleri (strain AV19 / DSM 6324 / JCM 9639 / NBRC 100938)).